Reading from the N-terminus, the 507-residue chain is Probable Xaa-Pro aminopeptidase HCAG_02413 (507 aa).

4 residues coordinate Mn(2+): aspartate 283, aspartate 294, glutamate 431, and glutamate 469.

Belongs to the peptidase M24B family. Requires Mn(2+) as cofactor.

The enzyme catalyses Release of any N-terminal amino acid, including proline, that is linked to proline, even from a dipeptide or tripeptide.. Its function is as follows. Catalyzes the removal of a penultimate prolyl residue from the N-termini of peptides. The sequence is that of Probable Xaa-Pro aminopeptidase HCAG_02413 from Ajellomyces capsulatus (strain NAm1 / WU24) (Darling's disease fungus).